The sequence spans 369 residues: Isopentenyl-diphosphate delta-isomerase (369 aa).

9–10 provides a ligand contact to substrate; sequence RK. FMN is bound by residues T65, 66–68, S96, and N125; that span reads GMT. A substrate-binding site is contributed by 96–98; it reads SQR. Q160 serves as a coordination point for substrate. A Mg(2+)-binding site is contributed by E161. FMN contacts are provided by residues K193, S218, T223, 275–277, and 296–297; these read GVR and AL.

Belongs to the IPP isomerase type 2 family. As to quaternary structure, homooctamer. Dimer of tetramers. FMN is required as a cofactor. Requires NADPH as cofactor. The cofactor is Mg(2+).

The protein localises to the cytoplasm. It carries out the reaction isopentenyl diphosphate = dimethylallyl diphosphate. Involved in the biosynthesis of isoprenoids. Catalyzes the 1,3-allylic rearrangement of the homoallylic substrate isopentenyl (IPP) to its allylic isomer, dimethylallyl diphosphate (DMAPP). This chain is Isopentenyl-diphosphate delta-isomerase, found in Sulfurisphaera tokodaii (strain DSM 16993 / JCM 10545 / NBRC 100140 / 7) (Sulfolobus tokodaii).